The following is a 197-amino-acid chain: dITP/XTP pyrophosphatase (197 aa).

8–13 contributes to the substrate binding site; that stretch reads TGNQGK. The active-site Proton acceptor is the Asp-69. Residue Asp-69 participates in Mg(2+) binding. Residues Ser-70, 154-157, Lys-177, and 182-183 contribute to the substrate site; these read FGYD and HR.

The protein belongs to the HAM1 NTPase family. As to quaternary structure, homodimer. It depends on Mg(2+) as a cofactor.

It carries out the reaction XTP + H2O = XMP + diphosphate + H(+). The catalysed reaction is dITP + H2O = dIMP + diphosphate + H(+). It catalyses the reaction ITP + H2O = IMP + diphosphate + H(+). In terms of biological role, pyrophosphatase that catalyzes the hydrolysis of nucleoside triphosphates to their monophosphate derivatives, with a high preference for the non-canonical purine nucleotides XTP (xanthosine triphosphate), dITP (deoxyinosine triphosphate) and ITP. Seems to function as a house-cleaning enzyme that removes non-canonical purine nucleotides from the nucleotide pool, thus preventing their incorporation into DNA/RNA and avoiding chromosomal lesions. The chain is dITP/XTP pyrophosphatase from Photobacterium profundum (strain SS9).